The primary structure comprises 409 residues: MARSKFERKKPHVNIGTIGHVDHGKTTLTAAISATLSTLGSTAAKKFDEIDAAPEEKARGITINTAHVEYETDNRHYAHVDCPGHADYVKNMITGAAQMDGAILVVSAADGPMPQTREHILLAKQVGVPTLVVFLNKEDQVDDEELLELVELEGRELLSQYDFPGDDIPFVAGSALLALEAVTKNPAIKQGEDKWVDKIFSLMEAVDTYIPTPERDVDKTFLMAVEDVFSITGRGTVATGRIERGIIKVGDTIEIVGLRETRTTTITGLEMFQKTLEEGLAGDNIGILLRGVQKKDIERGMVLAKPGTITPHTQFEAEVYILTKEEGGRHTPFFPGYRPQFYVRTTDVTGTINQFTADDGTDAEMVMPGDRIKMTAELINAIAIEQGMRFAIREGGRTVGAGVVSKILK.

The tr-type G domain maps to 10–214 (KPHVNIGTIG…AVDTYIPTPE (205 aa)). Positions 19–26 (GHVDHGKT) are G1. GTP is bound at residue 19–26 (GHVDHGKT). Residue threonine 26 coordinates Mg(2+). A G2 region spans residues 60 to 64 (GITIN). A G3 region spans residues 81–84 (DCPG). Residues 81 to 85 (DCPGH) and 136 to 139 (NKED) each bind GTP. The G4 stretch occupies residues 136 to 139 (NKED). The tract at residues 174-176 (SAL) is G5.

It belongs to the TRAFAC class translation factor GTPase superfamily. Classic translation factor GTPase family. EF-Tu/EF-1A subfamily.

Its subcellular location is the plastid. It localises to the chloroplast. It carries out the reaction GTP + H2O = GDP + phosphate + H(+). In terms of biological role, GTP hydrolase that promotes the GTP-dependent binding of aminoacyl-tRNA to the A-site of ribosomes during protein biosynthesis. The polypeptide is Elongation factor Tu, chloroplastic (tufA) (Pyropia yezoensis (Susabi-nori)).